The chain runs to 81 residues: CLAVATA3/ESR (CLE)-related protein 12 (81 aa).

An N-terminal signal peptide occupies residues 1–31 (MENSNKVPISKIGLIMLMIFSTFFMSPHARR). Positions 55-67 (KRSRTDLEDKAVP) are enriched in basic and acidic residues. A disordered region spans residues 55–81 (KRSRTDLEDKAVPGDRLSPGGPNHIHN). Residues P73 and P76 each carry the hydroxyproline modification. O-linked (Ara...) hydroxyproline glycosylation occurs at P76.

The protein belongs to the CLV3/ESR signal peptide family. In terms of processing, the O-glycosylation (arabinosylation) of the hydroxyproline Pro-76 enhances binding affinity of the CLE12p peptide for its receptor. In terms of tissue distribution, expressed in young nodules throughout the central tissue. Expressed in the apical region of elongated nodules, corresponding to the meristematic and early infection zones.

The protein localises to the secreted. It is found in the extracellular space. Signaling peptide involved in the regulation of nodulation. Moves from root to shoot to function with the receptor kinase SUNN, in a signaling pathway that plays roles during cellular differentiation, both at the onset of nodulation, and later during nodule meristem development and subsequent homeostasis. Interacts with SUNN signaling to control nodule numbers. SUNN is involved in the autoregulation of nodulation (AON), a long distance systemic signaling from root to shoot and back again, which allows legumes to limit the number of root nodules formed based on available nitrogen and previous rhizobial colonization. The protein is CLAVATA3/ESR (CLE)-related protein 12 of Medicago truncatula (Barrel medic).